A 371-amino-acid polypeptide reads, in one-letter code: Dual-specificity RNA methyltransferase RlmN (371 aa).

The Proton acceptor role is filled by Glu-86. The Radical SAM core domain occupies 105–338 (RHARYTICVS…CTIRQSKGLD (234 aa)). A disulfide bridge connects residues Cys-112 and Cys-343. 3 residues coordinate [4Fe-4S] cluster: Cys-119, Cys-123, and Cys-126. Residues 169–170 (GE), Ser-201, 224–226 (SLH), and Asn-300 each bind S-adenosyl-L-methionine. Cys-343 functions as the S-methylcysteine intermediate in the catalytic mechanism. Polar residues predominate over residues 348-363 (QRSQNLSPSNNNTSKP). A disordered region spans residues 348–371 (QRSQNLSPSNNNTSKPSDIKKSES).

This sequence belongs to the radical SAM superfamily. RlmN family. Requires [4Fe-4S] cluster as cofactor.

Its subcellular location is the cytoplasm. The catalysed reaction is adenosine(2503) in 23S rRNA + 2 reduced [2Fe-2S]-[ferredoxin] + 2 S-adenosyl-L-methionine = 2-methyladenosine(2503) in 23S rRNA + 5'-deoxyadenosine + L-methionine + 2 oxidized [2Fe-2S]-[ferredoxin] + S-adenosyl-L-homocysteine. It catalyses the reaction adenosine(37) in tRNA + 2 reduced [2Fe-2S]-[ferredoxin] + 2 S-adenosyl-L-methionine = 2-methyladenosine(37) in tRNA + 5'-deoxyadenosine + L-methionine + 2 oxidized [2Fe-2S]-[ferredoxin] + S-adenosyl-L-homocysteine. In terms of biological role, specifically methylates position 2 of adenine 2503 in 23S rRNA and position 2 of adenine 37 in tRNAs. m2A2503 modification seems to play a crucial role in the proofreading step occurring at the peptidyl transferase center and thus would serve to optimize ribosomal fidelity. The polypeptide is Dual-specificity RNA methyltransferase RlmN (Campylobacter curvus (strain 525.92)).